A 464-amino-acid chain; its full sequence is Adenylyltransferase and sulfurtransferase MOCS3 (464 aa).

Residues G101, D122, 129-133, K146, and 190-191 contribute to the ATP site; these read NNMHR and DN. 2 residues coordinate Zn(2+): C231 and C234. The Glycyl thioester intermediate; for adenylyltransferase activity role is filled by C248. Zn(2+) contacts are provided by C306 and C309. Residues 358–462 enclose the Rhodanese domain; the sequence is KKEQHVLLDV…WAANVNPNFP (105 aa). The active-site Cysteine persulfide intermediate; for sulfurtransferase activity is C422.

The protein in the N-terminal section; belongs to the HesA/MoeB/ThiF family. UBA4 subfamily. Requires Zn(2+) as cofactor.

The protein localises to the cytoplasm. The catalysed reaction is [molybdopterin-synthase sulfur-carrier protein]-C-terminal Gly-Gly + ATP + H(+) = [molybdopterin-synthase sulfur-carrier protein]-C-terminal Gly-Gly-AMP + diphosphate. It catalyses the reaction [molybdopterin-synthase sulfur-carrier protein]-C-terminal Gly-Gly-AMP + S-sulfanyl-L-cysteinyl-[cysteine desulfurase] + AH2 = [molybdopterin-synthase sulfur-carrier protein]-C-terminal-Gly-aminoethanethioate + L-cysteinyl-[cysteine desulfurase] + A + AMP + 2 H(+). It participates in tRNA modification; 5-methoxycarbonylmethyl-2-thiouridine-tRNA biosynthesis. Its pathway is cofactor biosynthesis; molybdopterin biosynthesis. Plays a central role in 2-thiolation of mcm(5)S(2)U at tRNA wobble positions of cytosolic tRNA(Lys), tRNA(Glu) and tRNA(Gln). Also essential during biosynthesis of the molybdenum cofactor. Acts by mediating the C-terminal thiocarboxylation of sulfur carriers URM1 and MOCS2A. Its N-terminus first activates URM1 and MOCS2A as acyl-adenylates (-COAMP), then the persulfide sulfur on the catalytic cysteine is transferred to URM1 and MOCS2A to form thiocarboxylation (-COSH) of their C-terminus. The reaction probably involves hydrogen sulfide that is generated from the persulfide intermediate and that acts as a nucleophile towards URM1 and MOCS2A. Subsequently, a transient disulfide bond is formed. Does not use thiosulfate as sulfur donor; NFS1 probably acting as a sulfur donor for thiocarboxylation reactions. This is Adenylyltransferase and sulfurtransferase MOCS3 from Arabidopsis thaliana (Mouse-ear cress).